The sequence spans 172 residues: Peptide deformylase (172 aa).

Fe cation contacts are provided by Cys92 and His134. Residue Glu135 is part of the active site. His138 provides a ligand contact to Fe cation.

It belongs to the polypeptide deformylase family. Fe(2+) is required as a cofactor.

The catalysed reaction is N-terminal N-formyl-L-methionyl-[peptide] + H2O = N-terminal L-methionyl-[peptide] + formate. Removes the formyl group from the N-terminal Met of newly synthesized proteins. Requires at least a dipeptide for an efficient rate of reaction. N-terminal L-methionine is a prerequisite for activity but the enzyme has broad specificity at other positions. The protein is Peptide deformylase of Saccharophagus degradans (strain 2-40 / ATCC 43961 / DSM 17024).